We begin with the raw amino-acid sequence, 111 residues long: Large ribosomal subunit protein uL23 (111 aa).

Belongs to the universal ribosomal protein uL23 family. In terms of assembly, part of the 50S ribosomal subunit. Contacts protein L29, and trigger factor when it is bound to the ribosome.

One of the early assembly proteins it binds 23S rRNA. One of the proteins that surrounds the polypeptide exit tunnel on the outside of the ribosome. Forms the main docking site for trigger factor binding to the ribosome. This chain is Large ribosomal subunit protein uL23, found in Nitrosomonas eutropha (strain DSM 101675 / C91 / Nm57).